The sequence spans 419 residues: Probable serine/threonine-protein kinase CST (419 aa).

G2 is lipidated: N-myristoyl glycine. The S-palmitoyl cysteine moiety is linked to residue C4. The disordered stretch occupies residues 8 to 48 (FSSSSPSKTGLHSHATTNNHSNGTEFSSTTGATTNSSVGQQ). Residues 15-48 (KTGLHSHATTNNHSNGTEFSSTTGATTNSSVGQQ) are compositionally biased toward polar residues. The Protein kinase domain occupies 86–368 (FKPDSMLGQG…KEVVEVLEHI (283 aa)). 92–100 (LGQGGFGKV) lines the ATP pocket. S117 is modified (phosphoserine). Residue K124 coordinates ATP. Y169 is modified (phosphotyrosine). D218 acts as the Proton acceptor in catalysis. S222 carries the phosphoserine modification. Residues T253 and T258 each carry the phosphothreonine modification. Y266 carries the phosphotyrosine modification. Residues 378–390 (SSTKQAVANSSRS) show a composition bias toward polar residues. The interval 378-419 (SSTKQAVANSSRSSPHHYRYKAGALGAERKRATPGRFGSVEK) is disordered.

The protein belongs to the protein kinase superfamily. Ser/Thr protein kinase family. Interacts with SOBIR1/EVR and RLK5/HAE. Post-translationally, autophosphorylated on serine, threonine and tyrosine residues.

It localises to the cell membrane. The protein resides in the nucleus. The catalysed reaction is L-seryl-[protein] + ATP = O-phospho-L-seryl-[protein] + ADP + H(+). It carries out the reaction L-threonyl-[protein] + ATP = O-phospho-L-threonyl-[protein] + ADP + H(+). Its function is as follows. Acts as a spatial inhibitor of signaling that modulates abscission zone cell adhesion and expansion. Acts both directly and indirectly by physically interacting with RLK5/HAE and SOBIR1/EVR at the cell surface. The chain is Probable serine/threonine-protein kinase CST from Arabidopsis thaliana (Mouse-ear cress).